A 211-amino-acid polypeptide reads, in one-letter code: tRNA (pseudouridine(54)-N(1))-methyltransferase (211 aa).

Positions 128, 150, and 183 each coordinate S-adenosyl-L-methionine.

The protein belongs to the methyltransferase superfamily. TrmY family. In terms of assembly, homodimer.

The protein resides in the cytoplasm. The enzyme catalyses pseudouridine(54) in tRNA + S-adenosyl-L-methionine = N(1)-methylpseudouridine(54) in tRNA + S-adenosyl-L-homocysteine + H(+). Specifically catalyzes the N1-methylation of pseudouridine at position 54 (Psi54) in tRNAs. The polypeptide is tRNA (pseudouridine(54)-N(1))-methyltransferase (Methanosarcina acetivorans (strain ATCC 35395 / DSM 2834 / JCM 12185 / C2A)).